The sequence spans 243 residues: TIGR03089 family protein (243 aa).

This sequence belongs to the TIGR03089 family.

The sequence is that of TIGR03089 family protein from Mycobacterium tuberculosis (strain ATCC 25618 / H37Rv).